Consider the following 100-residue polypeptide: Small ribosomal subunit protein uS14c (100 aa).

It belongs to the universal ribosomal protein uS14 family. Part of the 30S ribosomal subunit.

The protein localises to the plastid. Its subcellular location is the chloroplast. In terms of biological role, binds 16S rRNA, required for the assembly of 30S particles. This Angiopteris evecta (Mule's foot fern) protein is Small ribosomal subunit protein uS14c.